Reading from the N-terminus, the 231-residue chain is tRNA (guanine-N(1)-)-methyltransferase (231 aa).

S-adenosyl-L-methionine contacts are provided by residues glycine 112 and 132–137 (LGDFVL).

This sequence belongs to the RNA methyltransferase TrmD family. In terms of assembly, homodimer.

The protein localises to the cytoplasm. The enzyme catalyses guanosine(37) in tRNA + S-adenosyl-L-methionine = N(1)-methylguanosine(37) in tRNA + S-adenosyl-L-homocysteine + H(+). Specifically methylates guanosine-37 in various tRNAs. This chain is tRNA (guanine-N(1)-)-methyltransferase, found in Microcystis aeruginosa (strain NIES-843 / IAM M-2473).